A 196-amino-acid chain; its full sequence is Shikimate kinase (196 aa).

21 to 26 lines the ATP pocket; it reads GTGKSR. Ser-25 lines the Mg(2+) pocket. Positions 43, 67, and 89 each coordinate substrate. Arg-126 contacts ATP. Arg-145 lines the substrate pocket. Arg-161 serves as a coordination point for ATP.

Belongs to the shikimate kinase family. Monomer. Mg(2+) serves as cofactor.

It is found in the cytoplasm. The catalysed reaction is shikimate + ATP = 3-phosphoshikimate + ADP + H(+). It participates in metabolic intermediate biosynthesis; chorismate biosynthesis; chorismate from D-erythrose 4-phosphate and phosphoenolpyruvate: step 5/7. Its function is as follows. Catalyzes the specific phosphorylation of the 3-hydroxyl group of shikimic acid using ATP as a cosubstrate. This chain is Shikimate kinase, found in Deinococcus radiodurans (strain ATCC 13939 / DSM 20539 / JCM 16871 / CCUG 27074 / LMG 4051 / NBRC 15346 / NCIMB 9279 / VKM B-1422 / R1).